A 383-amino-acid chain; its full sequence is S-adenosylmethionine synthase (383 aa).

H15 lines the ATP pocket. D17 provides a ligand contact to Mg(2+). K(+) is bound at residue E43. Residues E56 and Q99 each contribute to the L-methionine site. The flexible loop stretch occupies residues 99 to 109 (QSPDINQGVDR). ATP-binding positions include 164-166 (DAK), 230-231 (RF), D239, 245-246 (RK), A262, and K266. D239 provides a ligand contact to L-methionine. K270 contributes to the L-methionine binding site.

This sequence belongs to the AdoMet synthase family. In terms of assembly, homotetramer; dimer of dimers. Mg(2+) serves as cofactor. K(+) is required as a cofactor.

It localises to the cytoplasm. The enzyme catalyses L-methionine + ATP + H2O = S-adenosyl-L-methionine + phosphate + diphosphate. It participates in amino-acid biosynthesis; S-adenosyl-L-methionine biosynthesis; S-adenosyl-L-methionine from L-methionine: step 1/1. Functionally, catalyzes the formation of S-adenosylmethionine (AdoMet) from methionine and ATP. The overall synthetic reaction is composed of two sequential steps, AdoMet formation and the subsequent tripolyphosphate hydrolysis which occurs prior to release of AdoMet from the enzyme. This is S-adenosylmethionine synthase from Shewanella oneidensis (strain ATCC 700550 / JCM 31522 / CIP 106686 / LMG 19005 / NCIMB 14063 / MR-1).